A 120-amino-acid polypeptide reads, in one-letter code: NAD(P)H-quinone oxidoreductase subunit 3 (120 aa).

3 consecutive transmembrane segments (helical) span residues 6 to 26 (GYEY…LALT), 64 to 84 (MFAL…PWAV), and 89 to 109 (LGLL…VALA).

The protein belongs to the complex I subunit 3 family. As to quaternary structure, NDH-1 can be composed of about 15 different subunits; different subcomplexes with different compositions have been identified which probably have different functions.

The protein localises to the cellular thylakoid membrane. It carries out the reaction a plastoquinone + NADH + (n+1) H(+)(in) = a plastoquinol + NAD(+) + n H(+)(out). It catalyses the reaction a plastoquinone + NADPH + (n+1) H(+)(in) = a plastoquinol + NADP(+) + n H(+)(out). Functionally, NDH-1 shuttles electrons from an unknown electron donor, via FMN and iron-sulfur (Fe-S) centers, to quinones in the respiratory and/or the photosynthetic chain. The immediate electron acceptor for the enzyme in this species is believed to be plastoquinone. Couples the redox reaction to proton translocation, and thus conserves the redox energy in a proton gradient. Cyanobacterial NDH-1 also plays a role in inorganic carbon-concentration. The sequence is that of NAD(P)H-quinone oxidoreductase subunit 3 from Prochlorococcus marinus (strain NATL1A).